Here is a 304-residue protein sequence, read N- to C-terminus: D-tagatose-1-phosphate kinase (304 aa).

Catalysis depends on Asp250, which acts as the Proton acceptor.

Belongs to the carbohydrate kinase PfkB family. Mg(2+) serves as cofactor.

The catalysed reaction is alpha-D-tagatopyranose 1-phosphate + ATP = D-tagatofuranose 1,6-bisphosphate + ADP + H(+). Its pathway is carbohydrate degradation. In terms of biological role, kinase involved in a D-tagatose catabolic pathway. Catalyzes the phosphorylation of D-tagatose-1-phosphate (Tag-1P) to D-tagatose-1,6-bisphosphate. The polypeptide is D-tagatose-1-phosphate kinase (Klebsiella oxytoca).